We begin with the raw amino-acid sequence, 136 residues long: MLSQIWILFTFMVCVIASKSKSDGLKFEITKKIPISKCKLKALPGDMVSVHYTGSLAENGKVFDSSLRRNEPIQFKLGAGQVIAGWEQGITGMCLGEKRTLHIPPELAYGSRGAGGVIPPNAVLDFDVELVDIARN.

The N-terminal stretch at 1–17 (MLSQIWILFTFMVCVIA) is a signal peptide. The region spanning 45–134 (GDMVSVHYTG…DFDVELVDIA (90 aa)) is the PPIase FKBP-type domain.

Belongs to the FKBP-type PPIase family. FKBP2 subfamily.

The protein localises to the endoplasmic reticulum. It catalyses the reaction [protein]-peptidylproline (omega=180) = [protein]-peptidylproline (omega=0). Its activity is regulated as follows. Inhibited by both FK506 and rapamycin. Functionally, PPIases accelerate the folding of proteins. It catalyzes the cis-trans isomerization of proline imidic peptide bonds in oligopeptides. This Candida glabrata (strain ATCC 2001 / BCRC 20586 / JCM 3761 / NBRC 0622 / NRRL Y-65 / CBS 138) (Yeast) protein is FK506-binding protein 2 (FPR2).